A 275-amino-acid chain; its full sequence is Myb/SANT-like DNA-binding domain-containing protein 3 (275 aa).

Positions phenylalanine 13–lysine 78 constitute a Myb-like domain. Serine 96 and serine 98 each carry phosphoserine. Lysine 154 participates in a covalent cross-link: Glycyl lysine isopeptide (Lys-Gly) (interchain with G-Cter in SUMO2). Residues glutamine 211–lysine 247 are a coiled coil. Serine 274 is modified (phosphoserine).

It belongs to the MSANTD3 family. Expressed in brain.

This is Myb/SANT-like DNA-binding domain-containing protein 3 (MSANTD3) from Homo sapiens (Human).